The chain runs to 487 residues: Malonate-semialdehyde dehydrogenase 2 (487 aa).

NAD(+) is bound by residues Phe154, Lys178, Glu181, Arg182, and Ser231. Cys286 functions as the Nucleophile in the catalytic mechanism. Glu386 contacts NAD(+).

This sequence belongs to the aldehyde dehydrogenase family. IolA subfamily. Homotetramer.

It catalyses the reaction 3-oxopropanoate + NAD(+) + CoA + H2O = hydrogencarbonate + acetyl-CoA + NADH + H(+). The enzyme catalyses 2-methyl-3-oxopropanoate + NAD(+) + CoA + H2O = propanoyl-CoA + hydrogencarbonate + NADH + H(+). The protein operates within polyol metabolism; myo-inositol degradation into acetyl-CoA; acetyl-CoA from myo-inositol: step 7/7. Catalyzes the oxidation of malonate semialdehyde (MSA) and methylmalonate semialdehyde (MMSA) into acetyl-CoA and propanoyl-CoA, respectively. Is involved in a myo-inositol catabolic pathway. Bicarbonate, and not CO2, is the end-product of the enzymatic reaction. This Bacillus anthracis protein is Malonate-semialdehyde dehydrogenase 2.